The primary structure comprises 176 residues: Co-chaperone protein HscB homolog (176 aa).

Residues 7–79 (THFSLFGLPE…LKRATYLLHL (73 aa)) form the J domain.

Belongs to the HscB family. As to quaternary structure, interacts with HscA and stimulates its ATPase activity.

Functionally, co-chaperone involved in the maturation of iron-sulfur cluster-containing proteins. Seems to help targeting proteins to be folded toward HscA. This is Co-chaperone protein HscB homolog from Ralstonia nicotianae (strain ATCC BAA-1114 / GMI1000) (Ralstonia solanacearum).